Consider the following 197-residue polypeptide: MISSLRGEVLEVALDHVVIEAAGVGYRVNATPSTLATLRQGTDARLITAMIVREDSMTLYGFVDGETRDLFLTLLSVSGVGPRLAMATLSVHDANGLRQALADGDVTALTRVPGIGKRGAERMVVELRDKVGPAGSAATAPAVNGHTVRAPVVEALVGLGFAAKQAEEATDKVLAGDGEATTSSALRAALSLLGKAR.

The tract at residues methionine 1–valine 63 is domain I. The domain II stretch occupies residues aspartate 64–threonine 139. The segment at threonine 139 to valine 143 is flexible linker. The interval asparagine 144–arginine 197 is domain III.

The protein belongs to the RuvA family. Homotetramer. Forms an RuvA(8)-RuvB(12)-Holliday junction (HJ) complex. HJ DNA is sandwiched between 2 RuvA tetramers; dsDNA enters through RuvA and exits via RuvB. An RuvB hexamer assembles on each DNA strand where it exits the tetramer. Each RuvB hexamer is contacted by two RuvA subunits (via domain III) on 2 adjacent RuvB subunits; this complex drives branch migration. In the full resolvosome a probable DNA-RuvA(4)-RuvB(12)-RuvC(2) complex forms which resolves the HJ.

Its subcellular location is the cytoplasm. Its function is as follows. The RuvA-RuvB-RuvC complex processes Holliday junction (HJ) DNA during genetic recombination and DNA repair, while the RuvA-RuvB complex plays an important role in the rescue of blocked DNA replication forks via replication fork reversal (RFR). RuvA specifically binds to HJ cruciform DNA, conferring on it an open structure. The RuvB hexamer acts as an ATP-dependent pump, pulling dsDNA into and through the RuvAB complex. HJ branch migration allows RuvC to scan DNA until it finds its consensus sequence, where it cleaves and resolves the cruciform DNA. The protein is Holliday junction branch migration complex subunit RuvA of Mycobacterium marinum (strain ATCC BAA-535 / M).